The sequence spans 558 residues: Cytochrome P450 monooxygenase sdnT (558 aa).

A helical transmembrane segment spans residues 21-41 (IISLTTCFVCAFAVSFVALAI). The segment at 298-317 (QNAGSNTRPKPPKRKQDTQP) is disordered. N-linked (GlcNAc...) asparagine glycans are attached at residues Asn-464 and Asn-495. Cys-505 contacts heme.

Belongs to the cytochrome P450 family. Requires heme as cofactor.

It localises to the membrane. The protein operates within antibiotic biosynthesis. Cytochrome P450 monooxygenase; part of the gene cluster that mediates the biosynthesis of sordarin and hypoxysordarin, glycoside antibiotics with a unique tetracyclic diterpene aglycone structure. First, the geranylgeranyl diphosphate synthase sdnC constructs GGDP from farnesyl diphosphate and isopentenyl diphosphate. The diterpene cyclase sdnA then catalyzes the cyclization of GGDP to afford cycloaraneosene. Cycloaraneosene is then hydroxylated four times by the putative cytochrome P450 monooxygenases sdnB, sdnE, sdnF and sdnH to give a hydroxylated cycloaraneosene derivative such as cycloaraneosene-8,9,13,19-tetraol. Although the order of the hydroxylations is unclear, at least C8, C9 and C13 of the cycloaraneosene skeleton are hydroxylated before the sordaricin formation. Dehydration of the 13-hydroxy group of the hydroxylated cycloaraneosene derivative might be catalyzed by an unassigned hypothetical protein such as sdnG and sdnP to construct the cyclopentadiene moiety. The FAD-dependent oxidoreductase sdnN is proposed to catalyze the oxidation at C9 of the hydroxylated cycloaraneosene derivative and also catalyze the Baeyer-Villiger oxidation to give the lactone intermediate. The presumed lactone intermediate would be hydrolyzed to give an acrolein moiety and a carboxylate moiety. Then, [4+2]cycloaddition would occur between the acrolein moiety and the cyclopentadiene moiety to give sordaricin. SdnN might also be involved in the [4+2]cycloaddition after the hypothesized oxidation to accommodate the oxidized product and prompt the [4+2]cycloaddition. GDP-6-deoxy-D-altrose may be biosynthesized from GDP-D-mannose by the putative GDP-mannose-4,6-dehydratase sdnI and the short-chain dehydrogenase sdnK. The glycosyltransferase sdnJ catalyzes the attachment of 6-deoxy-D-altrose onto the 19-hydroxy group of sordaricin to give 4'-O-demethylsordarin. The methyltransferase sdnD would complete the biosynthesis of sordarin. Sordarin can be further modified into hypoxysordarin. The unique acyl chain at the 3'-hydroxy group of hypoxysordarin would be constructed by an iterative type I PKS sdnO and the trans-acting polyketide methyltransferase sdnL. SdnL would be responsible for the introduction of an alpha-methyl group of the polyketide chain. Alternatively, the beta-lactamase-like protein sdnR might be responsible for the cleavage and transfer of the polyketide chain from the PKS sdnO to sordarin. Two putative cytochrome P450 monooxygenases, sdnQ and sdnT, might catalyze the epoxidations of the polyketide chain to complete the biosynthesis of hypoxysordarin. Transcriptional regulators sdnM and sdnS are presumably encoded for the transcriptional regulation of the expression of the sdn gene cluster. The chain is Cytochrome P450 monooxygenase sdnT from Sordaria araneosa (Pleurage araneosa).